A 214-amino-acid polypeptide reads, in one-letter code: Rac-like GTP-binding protein 2 (214 aa).

14-21 (GDGAVGKT) provides a ligand contact to GTP. The Effector region signature appears at 36–44 (YIPTVFDNF). Residues 61–65 (DTAGQ) and 119–122 (TKLD) contribute to the GTP site.

It belongs to the small GTPase superfamily. Rho family. In terms of processing, may be palmitoylated.

It localises to the cytoplasm. The protein resides in the membrane. Functionally, inactive GDP-bound Rho GTPases reside in the cytosol, are found in a complex with Rho GDP-dissociation inhibitors (Rho GDIs), and are released from the GDI protein in order to translocate to membranes upon activation. The polypeptide is Rac-like GTP-binding protein 2 (RAC2) (Oryza sativa subsp. japonica (Rice)).